The sequence spans 192 residues: UPF0312 protein Spro_1887 (192 aa).

The N-terminal stretch at 1–23 (MLKKTVLGLTAGAMLLSAGSALA) is a signal peptide.

The protein belongs to the UPF0312 family. Type 1 subfamily.

Its subcellular location is the periplasm. This chain is UPF0312 protein Spro_1887, found in Serratia proteamaculans (strain 568).